The sequence spans 864 residues: DNA mismatch repair protein MutS (864 aa).

Glycine 621–serine 628 is a binding site for ATP. The tract at residues glutamate 804–proline 833 is disordered.

This sequence belongs to the DNA mismatch repair MutS family.

Its function is as follows. This protein is involved in the repair of mismatches in DNA. It is possible that it carries out the mismatch recognition step. This protein has a weak ATPase activity. In Teredinibacter turnerae (strain ATCC 39867 / T7901), this protein is DNA mismatch repair protein MutS.